The chain runs to 149 residues: Large ribosomal subunit protein bL9 (149 aa).

The protein belongs to the bacterial ribosomal protein bL9 family.

Functionally, binds to the 23S rRNA. In Enterobacter sp. (strain 638), this protein is Large ribosomal subunit protein bL9.